The following is a 268-amino-acid chain: Nickel import ATP-binding protein NikE (268 aa).

The ABC transporter domain maps to 4–252; it reads LNVCGLSHHY…SSDAGRVLQN (249 aa). ATP is bound at residue 45–52; that stretch reads GRSGCGKS.

It belongs to the ABC transporter superfamily. Nickel importer (TC 3.A.1.5.3) family. As to quaternary structure, the complex is composed of two ATP-binding proteins (NikD and NikE), two transmembrane proteins (NikB and NikC) and a solute-binding protein (NikA).

The protein localises to the cell inner membrane. The catalysed reaction is Ni(2+)(out) + ATP + H2O = Ni(2+)(in) + ADP + phosphate + H(+). Part of the ABC transporter complex NikABCDE involved in nickel import. Responsible for energy coupling to the transport system. The sequence is that of Nickel import ATP-binding protein NikE from Shigella flexneri.